The following is a 79-amino-acid chain: Cell division topological specificity factor (79 aa).

This sequence belongs to the MinE family.

Prevents the cell division inhibition by proteins MinC and MinD at internal division sites while permitting inhibition at polar sites. This ensures cell division at the proper site by restricting the formation of a division septum at the midpoint of the long axis of the cell. The sequence is that of Cell division topological specificity factor from Nitratiruptor sp. (strain SB155-2).